Reading from the N-terminus, the 211-residue chain is RNA chaperone ProQ (211 aa).

The disordered stretch occupies residues 113–147 (RRAVEKANNPKANKKRSVYHSGNKSENKKSAGKKF).

It belongs to the ProQ family.

It localises to the cytoplasm. Its function is as follows. RNA chaperone with significant RNA binding, RNA strand exchange and RNA duplexing activities. This Histophilus somni (strain 129Pt) (Haemophilus somnus) protein is RNA chaperone ProQ.